The chain runs to 869 residues: Protein translocase subunit SecA (869 aa).

ATP is bound by residues Gln85, 103–107 (GEGKT), and Asp508.

The protein belongs to the SecA family. Monomer and homodimer. Part of the essential Sec protein translocation apparatus which comprises SecA, SecYEG and auxiliary proteins SecDF. Other proteins may also be involved.

Its subcellular location is the cell membrane. The protein resides in the cytoplasm. The catalysed reaction is ATP + H2O + cellular proteinSide 1 = ADP + phosphate + cellular proteinSide 2.. Functionally, part of the Sec protein translocase complex. Interacts with the SecYEG preprotein conducting channel. Has a central role in coupling the hydrolysis of ATP to the transfer of proteins into and across the cell membrane, serving as an ATP-driven molecular motor driving the stepwise translocation of polypeptide chains across the membrane. The sequence is that of Protein translocase subunit SecA from Deinococcus deserti (strain DSM 17065 / CIP 109153 / LMG 22923 / VCD115).